The chain runs to 240 residues: NADH-quinone oxidoreductase subunit C (240 aa).

The tract at residues 1 to 82 is disordered; it reads MSEEEKPKPK…PVDENRDPEP (82 aa). The span at 11–20 shows a compositional bias: low complexity; sequence LSPALAAKMA. A compositionally biased stretch (basic and acidic residues) spans 67 to 82; that stretch reads DKPKAEPVDENRDPEP.

The protein belongs to the complex I 30 kDa subunit family. In terms of assembly, NDH-1 is composed of 14 different subunits. Subunits NuoB, C, D, E, F, and G constitute the peripheral sector of the complex.

The protein resides in the cell inner membrane. It catalyses the reaction a quinone + NADH + 5 H(+)(in) = a quinol + NAD(+) + 4 H(+)(out). Its function is as follows. NDH-1 shuttles electrons from NADH, via FMN and iron-sulfur (Fe-S) centers, to quinones in the respiratory chain. The immediate electron acceptor for the enzyme in this species is believed to be a menaquinone. Couples the redox reaction to proton translocation (for every two electrons transferred, four hydrogen ions are translocated across the cytoplasmic membrane), and thus conserves the redox energy in a proton gradient. This chain is NADH-quinone oxidoreductase subunit C, found in Chloroherpeton thalassium (strain ATCC 35110 / GB-78).